A 208-amino-acid chain; its full sequence is MDSKSGRSESAINIPESNSTKHKSTVVHTATKVAAVAPRGGGWRRGVSIFDFILRICALAAALAATATMGTTDQTLPFFTQFFQFQASYDDLPAFTFFVVANGIASGYLVLSLPFSIATIVRPHAAAIKLLLIIFDTVMVAFTAAAAAAAAAIVYLAHNGNSKTNWFAICQQFNDFCQRVSGAVVASFVAAVILIFLVVLSAVAIRKH.

The tract at residues 1 to 23 (MDSKSGRSESAINIPESNSTKHK) is disordered. The Cytoplasmic portion of the chain corresponds to 1 to 46 (MDSKSGRSESAINIPESNSTKHKSTVVHTATKVAAVAPRGGGWRRG). Over residues 8-18 (SESAINIPESN) the composition is skewed to polar residues. The helical transmembrane segment at 47–67 (VSIFDFILRICALAAALAATA) threads the bilayer. At 68 to 96 (TMGTTDQTLPFFTQFFQFQASYDDLPAFT) the chain is on the extracellular side. The chain crosses the membrane as a helical span at residues 97 to 117 (FFVVANGIASGYLVLSLPFSI). Topologically, residues 118–129 (ATIVRPHAAAIK) are cytoplasmic. The helical transmembrane segment at 130–150 (LLLIIFDTVMVAFTAAAAAAA) threads the bilayer. At 151 to 184 (AAIVYLAHNGNSKTNWFAICQQFNDFCQRVSGAV) the chain is on the extracellular side. A helical transmembrane segment spans residues 185–205 (VASFVAAVILIFLVVLSAVAI). Residues 206-208 (RKH) lie on the Cytoplasmic side of the membrane.

The protein belongs to the Casparian strip membrane proteins (CASP) family. Homodimer and heterodimers.

It localises to the cell membrane. Functionally, regulates membrane-cell wall junctions and localized cell wall deposition. Required for establishment of the Casparian strip membrane domain (CSD) and the subsequent formation of Casparian strips, a cell wall modification of the root endodermis that determines an apoplastic barrier between the intraorganismal apoplasm and the extraorganismal apoplasm and prevents lateral diffusion. This Triphysaria pusilla (Dwarf owl's-clover) protein is Casparian strip membrane protein 2.